Consider the following 394-residue polypeptide: Elongation factor Tu 1 (394 aa).

In terms of domain architecture, tr-type G spans 10–204 (KPHVNVGTIG…YLDSYIPEPE (195 aa)). The G1 stretch occupies residues 19-26 (GHVDHGKT). 19-26 (GHVDHGKT) contacts GTP. Threonine 26 is a binding site for Mg(2+). The segment at 60–64 (GITIN) is G2. The interval 81–84 (DCPG) is G3. GTP is bound by residues 81–85 (DCPGH) and 136–139 (NKCD). Residues 136-139 (NKCD) form a G4 region. Residues 174-176 (SAL) form a G5 region.

The protein belongs to the TRAFAC class translation factor GTPase superfamily. Classic translation factor GTPase family. EF-Tu/EF-1A subfamily. In terms of assembly, monomer.

The protein localises to the cytoplasm. It catalyses the reaction GTP + H2O = GDP + phosphate + H(+). GTP hydrolase that promotes the GTP-dependent binding of aminoacyl-tRNA to the A-site of ribosomes during protein biosynthesis. The polypeptide is Elongation factor Tu 1 (Yersinia enterocolitica serotype O:8 / biotype 1B (strain NCTC 13174 / 8081)).